The primary structure comprises 321 residues: Gap junction delta-2 protein (321 aa).

Residues 1-19 are Cytoplasmic-facing; that stretch reads MGEWTILERLLEAAVQQHS. The helical transmembrane segment at 20 to 42 threads the bilayer; it reads TMIGRILLTVVVIFRILIVAIVG. The Extracellular portion of the chain corresponds to 43–75; sequence ETVYDDEQTMFVCNTLQPGCNQACYDRAFPISH. A helical membrane pass occupies residues 76-98; it reads IRYWVFQIIMVCTPSLCFITYSV. The Cytoplasmic segment spans residues 99 to 197; that stretch reads HQSAKQRERR…KLRRQEGISR (99 aa). The tract at residues 120-141 is disordered; sequence PAESIGGPGGTGGGGSGGSKRE. Positions 125-137 are enriched in gly residues; it reads GGPGGTGGGGSGG. Residues 198–220 form a helical membrane-spanning segment; the sequence is FYIIQVVFRNALEIGFLVGQYFL. Residues 221 to 252 lie on the Extracellular side of the membrane; sequence YGFSVPGLYECNRYPCIKEVECYVSRPTEKTV. A helical membrane pass occupies residues 253–275; that stretch reads FLVFMFAVSGICVVLNLAELNHL. Over 276 to 321 the chain is Cytoplasmic; that stretch reads GWRKIKLAVRGAQAKRKSVYEIRNKDLPRVSVPNFGRTQSSDSAYV.

It belongs to the connexin family. Delta-type subfamily. In terms of assembly, a connexon is composed of a hexamer of connexins. In terms of tissue distribution, highly expressed in neurons.

Its subcellular location is the cell membrane. It localises to the cell junction. It is found in the gap junction. In terms of biological role, one gap junction consists of a cluster of closely packed pairs of transmembrane channels, the connexons, through which materials of low MW diffuse from one cell to a neighboring cell. In Mus musculus (Mouse), this protein is Gap junction delta-2 protein (Gjd2).